Here is a 182-residue protein sequence, read N- to C-terminus: Ribosome maturation factor RimM (182 aa).

Residues 103-182 (EGDYYWKDLM…SIEVDWDPGF (80 aa)) enclose the PRC barrel domain.

This sequence belongs to the RimM family. As to quaternary structure, binds ribosomal protein uS19.

It is found in the cytoplasm. Its function is as follows. An accessory protein needed during the final step in the assembly of 30S ribosomal subunit, possibly for assembly of the head region. Essential for efficient processing of 16S rRNA. May be needed both before and after RbfA during the maturation of 16S rRNA. It has affinity for free ribosomal 30S subunits but not for 70S ribosomes. This is Ribosome maturation factor RimM from Escherichia coli O139:H28 (strain E24377A / ETEC).